Reading from the N-terminus, the 704-residue chain is Polyribonucleotide nucleotidyltransferase (704 aa).

The Mg(2+) site is built by Asp-488 and Asp-494. A KH domain is found at 555–614 (PRITTLKINPEKIRDVIGKGGATIRALTEETGTTIELEDDGTVKIASANGDATKEAIRRI). The S1 motif domain occupies 624 to 692 (GTIYNGKVVR…RQGRVRLSMK (69 aa)).

The protein belongs to the polyribonucleotide nucleotidyltransferase family. As to quaternary structure, component of the RNA degradosome, which is a multiprotein complex involved in RNA processing and mRNA degradation. Mg(2+) is required as a cofactor.

The protein resides in the cytoplasm. The enzyme catalyses RNA(n+1) + phosphate = RNA(n) + a ribonucleoside 5'-diphosphate. Functionally, involved in mRNA degradation. Catalyzes the phosphorolysis of single-stranded polyribonucleotides processively in the 3'- to 5'-direction. The sequence is that of Polyribonucleotide nucleotidyltransferase from Shewanella sediminis (strain HAW-EB3).